The following is a 299-amino-acid chain: Phosphatidylcholine-sterol acyltransferase (299 aa).

N-linked (GlcNAc...) asparagine glycosylation is present at Asn30. The active-site Nucleophile is Ser127. Asn185 is a glycosylation site (N-linked (GlcNAc...) asparagine). An intrachain disulfide couples Cys226 to Cys269. Active-site charge relay system residues include Asp258 and His290.

The protein belongs to the AB hydrolase superfamily. Lipase family.

It localises to the secreted. The catalysed reaction is a sterol + a 1,2-diacyl-sn-glycero-3-phosphocholine = a sterol ester + a 1-acyl-sn-glycero-3-phosphocholine. Its activity is regulated as follows. APOA1 is the most potent activator in plasma. Also activated by APOE, APOC1 and APOA4. Functionally, central enzyme in the extracellular metabolism of plasma lipoproteins. Synthesized mainly in the liver and secreted into plasma where it converts cholesterol and phosphatidylcholines (lecithins) to cholesteryl esters and lysophosphatidylcholines on the surface of high and low density lipoproteins (HDLs and LDLs). The cholesterol ester is then transported back to the liver. Has a preference for plasma 16:0-18:2 or 18:O-18:2 phosphatidylcholines. Also produced in the brain by primary astrocytes, and esterifies free cholesterol on nascent APOE-containing lipoproteins secreted from glia and influences cerebral spinal fluid (CSF) APOE- and APOA1 levels. Together with APOE and the cholesterol transporter ABCA1, plays a key role in the maturation of glial-derived, nascent lipoproteins. Required for remodeling high-density lipoprotein particles into their spherical forms. The polypeptide is Phosphatidylcholine-sterol acyltransferase (LCAT) (Eliomys quercinus (Garden dormouse)).